We begin with the raw amino-acid sequence, 109 residues long: Small ribosomal subunit protein uS17 (109 aa).

It belongs to the universal ribosomal protein uS17 family. As to quaternary structure, part of the 30S ribosomal subunit.

Functionally, one of the primary rRNA binding proteins, it binds specifically to the 5'-end of 16S ribosomal RNA. This is Small ribosomal subunit protein uS17 from Methanococcus vannielii.